The primary structure comprises 594 residues: CTP synthase (594 aa).

The interval 1-272 (MARPKNVKYV…DLRVLKKLGL (272 aa)) is amidoligase domain. Ser-18 provides a ligand contact to CTP. Ser-18 provides a ligand contact to UTP. ATP is bound at residue 19–24 (SLGKGI). Tyr-59 provides a ligand contact to L-glutamine. ATP is bound at residue Asp-76. Residues Asp-76 and Glu-146 each contribute to the Mg(2+) site. CTP-binding positions include 153-155 (DIE), 193-198 (KTKPTQ), and Lys-229. UTP contacts are provided by residues 193–198 (KTKPTQ) and Lys-229. The 245-residue stretch at 299–543 (TIVVCGKYTE…VGAAKSYAAV (245 aa)) folds into the Glutamine amidotransferase type-1 domain. An L-glutamine-binding site is contributed by Gly-363. Cys-390 acts as the Nucleophile; for glutamine hydrolysis in catalysis. L-glutamine-binding positions include 391 to 394 (LGMQ), Glu-414, and Arg-471. Active-site residues include His-516 and Glu-518. Residues 562–571 (AEAYAAYSEE) are compositionally biased toward low complexity. The interval 562–594 (AEAYAAYSEESSAESKSFFPDNGGHDEERDSGQ) is disordered. The span at 584–594 (GGHDEERDSGQ) shows a compositional bias: basic and acidic residues.

Belongs to the CTP synthase family. Homotetramer.

It catalyses the reaction UTP + L-glutamine + ATP + H2O = CTP + L-glutamate + ADP + phosphate + 2 H(+). The catalysed reaction is L-glutamine + H2O = L-glutamate + NH4(+). It carries out the reaction UTP + NH4(+) + ATP = CTP + ADP + phosphate + 2 H(+). It functions in the pathway pyrimidine metabolism; CTP biosynthesis via de novo pathway; CTP from UDP: step 2/2. Its activity is regulated as follows. Allosterically activated by GTP, when glutamine is the substrate; GTP has no effect on the reaction when ammonia is the substrate. The allosteric effector GTP functions by stabilizing the protein conformation that binds the tetrahedral intermediate(s) formed during glutamine hydrolysis. Inhibited by the product CTP, via allosteric rather than competitive inhibition. Its function is as follows. Catalyzes the ATP-dependent amination of UTP to CTP with either L-glutamine or ammonia as the source of nitrogen. Regulates intracellular CTP levels through interactions with the four ribonucleotide triphosphates. The sequence is that of CTP synthase from Chlorobium phaeovibrioides (strain DSM 265 / 1930) (Prosthecochloris vibrioformis (strain DSM 265)).